We begin with the raw amino-acid sequence, 73 residues long: Toxin Td4 (73 aa).

Residues 1–7 (IGMVVEC) form the signal peptide. The region spanning 8–70 (KDGYLVGNDG…TWDRATNRCG (63 aa)) is the LCN-type CS-alpha/beta domain. 4 disulfides stabilise this stretch: Cys18–Cys69, Cys22–Cys44, Cys30–Cys50, and Cys34–Cys52. Arg71 carries the arginine amide modification.

It belongs to the long (4 C-C) scorpion toxin superfamily. Sodium channel inhibitor family. Beta subfamily. Expressed by the venom gland.

Its subcellular location is the secreted. Functionally, beta toxins bind voltage-independently at site-4 of sodium channels (Nav) and shift the voltage of activation toward more negative potentials thereby affecting sodium channel activation and promoting spontaneous and repetitive firing. In Tityus discrepans (Venezuelan scorpion), this protein is Toxin Td4.